The chain runs to 106 residues: Large ribosomal subunit protein uL24 (106 aa).

A disordered region spans residues 1-20 (MNKRAKSKNREPLRKSPVKR). The span at 8–20 (KNREPLRKSPVKR) shows a compositional bias: basic and acidic residues.

Belongs to the universal ribosomal protein uL24 family. In terms of assembly, part of the 50S ribosomal subunit.

One of two assembly initiator proteins, it binds directly to the 5'-end of the 23S rRNA, where it nucleates assembly of the 50S subunit. Functionally, one of the proteins that surrounds the polypeptide exit tunnel on the outside of the subunit. The chain is Large ribosomal subunit protein uL24 from Methylacidiphilum infernorum (isolate V4) (Methylokorus infernorum (strain V4)).